Consider the following 2259-residue polypeptide: Putative Polycomb group protein ASXL3 (2259 aa).

The HTH HARE-type domain maps to 10–83 (RTWAEAARLA…KSGLYALRKE (74 aa)). Residues 181–230 (VVLTPLKVSDEQSDSPSGSESKNGEADSSDKEMKHGQKSPTGKQTSQHLK) are disordered. Residues 202-215 (KNGEADSSDKEMKH) show a composition bias toward basic and acidic residues. Residues 218–227 (KSPTGKQTSQ) are compositionally biased toward polar residues. In terms of domain architecture, DEUBAD spans 253–362 (PGSILVNTNL…FERFYGERSG (110 aa)). Disordered regions lie at residues 364–399 (SREE…AQNA), 607–643 (CISE…CTPA), 703–810 (EASP…IPEP), 857–1012 (SEMT…PLKI), 1025–1049 (SQPV…NTGA), 1126–1150 (RLPS…TKME), 1433–1462 (LSGE…GGFV), 1614–1643 (DPMR…GLKA), 1687–1719 (DFPG…TTSP), and 1993–2075 (NMLS…TTKR). 3 stretches are compositionally biased toward polar residues: residues 607-617 (CISETSFSSES), 630-643 (GETQ…CTPA), and 703-717 (EASP…SEAS). Positions 722-741 (LPPTSETSSESSMPLTSETP) are enriched in low complexity. Composition is skewed to polar residues over residues 770–781 (KSPSGSEEANSP) and 926–945 (QSST…SEPS). Basic and acidic residues-rich tracts occupy residues 949–985 (DGIR…DDQS) and 995–1006 (PEKEQPPREEPR). Over residues 1034-1043 (RASTSTSVSS) the composition is skewed to low complexity. Residues 1437–1448 (NLDNNSGPLNRT) are compositionally biased toward polar residues. Over residues 1699–1719 (EVTSSASVQPTQTMKPSTTSP) the composition is skewed to polar residues. Pro residues predominate over residues 2023–2055 (PLPPPPPPPPPPPPPLALPPPPPPPPPLPPPLP). A PHD-type; atypical zinc finger spans residues 2221-2258 (ELKCSCRLKAMIVCKGCGAFCHDDCIGPSKLCVACLVV).

The protein belongs to the Asx family. As to quaternary structure, core component of the polycomb repressive deubiquitinase (PR-DUB) complex, at least composed of BAP1, one of ASXL1, ASXL2 or (probably) ASXL3, and one of MBD5 or MBD6. Distinct combinations of ASXL and MBD proteins may preferentially bind specific histone modification marks. The PR-DUB core associates with a number of accessory proteins, including FOXK1, FOXK2, KDM1B, HCFC1 and OGT; KDM1B specifically associates with ASXL2 PR-DUB complexes. Interacts (via PHD domain) with MBD5 and MBD6 (via MBD domain); the interaction is probably direct and mediates association of MBD proteins with the PR-DUB core.

The protein resides in the nucleus. In terms of biological role, putative Polycomb group (PcG) protein. PcG proteins act by forming multiprotein complexes, which are required to maintain the transcriptionally repressive state of homeotic genes throughout development. PcG proteins are not required to initiate repression, but to maintain it during later stages of development. They probably act via methylation of histones, rendering chromatin heritably changed in its expressibility. Non-catalytic component of the PR-DUB complex, a complex that specifically mediates deubiquitination of histone H2A monoubiquitinated at 'Lys-119' (H2AK119ub1). The PR-DUB complex is an epigenetic regulator of gene expression and acts as a transcriptional coactivator, affecting genes involved in development, cell communication, signaling, cell proliferation and cell viability. ASXL1, ASXL2 and ASXL3 function redundantly in the PR-DUB complex and are essential for chromatin recruitment and transcriptional activation of associated genes. This Mus musculus (Mouse) protein is Putative Polycomb group protein ASXL3 (Asxl3).